The following is a 719-amino-acid chain: Glutathionylspermidine synthase (719 aa).

The 147-residue stretch at 54–200 folds into the Peptidase C51 domain; sequence CLPLSSFERK…TESGEVELLD (147 aa). Arg350 serves as a coordination point for glutathione. 350 to 352 is an ATP binding site; the sequence is RFD. Mg(2+)-binding residues include Asp352, Glu364, and Asn366. Ser369 is a glutathione binding site. Glu432 provides a ligand contact to spermidine. Residues Glu433 and Thr501 each contribute to the glutathione site. Residues Lys544, Lys579, Gly586, Gln653, and 689–691 each bind ATP; that span reads KIT.

This sequence in the C-terminal section; belongs to the glutathionylspermidine synthase preATP-grasp family. It depends on Mg(2+) as a cofactor. In terms of processing, the N-terminus is blocked.

It carries out the reaction spermidine + glutathione + ATP = glutathionylspermidine + ADP + phosphate + H(+). Functionally, conjugates glutathione (gamma-Glu-Cys-Gly) and spermidine to form glutathionylspermidine in the biosynthesis trypanothione (N(1),N(8)-bis(glutathionyl)spermidine), which is involved in maintaining intracellular thiol redox and in defense against oxidants. This Crithidia fasciculata protein is Glutathionylspermidine synthase (GSP).